Here is a 201-residue protein sequence, read N- to C-terminus: Large ribosomal subunit protein uL4 (201 aa).

A disordered region spans residues 44-71 (RAQKTRAEVTGSGKKPWRQKGTGRARSG).

Belongs to the universal ribosomal protein uL4 family. As to quaternary structure, part of the 50S ribosomal subunit.

Its function is as follows. One of the primary rRNA binding proteins, this protein initially binds near the 5'-end of the 23S rRNA. It is important during the early stages of 50S assembly. It makes multiple contacts with different domains of the 23S rRNA in the assembled 50S subunit and ribosome. In terms of biological role, forms part of the polypeptide exit tunnel. The polypeptide is Large ribosomal subunit protein uL4 (Pectobacterium carotovorum subsp. carotovorum (strain PC1)).